Reading from the N-terminus, the 717-residue chain is Catalase-peroxidase (717 aa).

Residues 1–12 (MTSKGMCPVAHG) form the signal peptide. Residues 93-221 (WHSAGSYRIA…LAAVMMGLIY (129 aa)) constitute a cross-link (tryptophyl-tyrosyl-methioninium (Trp-Tyr) (with M-247)). Histidine 94 serves as the catalytic Proton acceptor. The tryptophyl-tyrosyl-methioninium (Tyr-Met) (with W-93) cross-link spans 221-247 (YVNPEGVDGKPDPLKTAQDMRVTFARM). Histidine 262 contacts heme b.

Belongs to the peroxidase family. Peroxidase/catalase subfamily. As to quaternary structure, homodimer or homotetramer. It depends on heme b as a cofactor. Formation of the three residue Trp-Tyr-Met cross-link is important for the catalase, but not the peroxidase activity of the enzyme.

It carries out the reaction H2O2 + AH2 = A + 2 H2O. It catalyses the reaction 2 H2O2 = O2 + 2 H2O. Its function is as follows. Bifunctional enzyme with both catalase and broad-spectrum peroxidase activity. This Polynucleobacter asymbioticus (strain DSM 18221 / CIP 109841 / QLW-P1DMWA-1) (Polynucleobacter necessarius subsp. asymbioticus) protein is Catalase-peroxidase.